A 394-amino-acid chain; its full sequence is MSRVVLAYSGGLDTSVCIELLRERYGYDEVITVTADVGQPEEELREAEEKARKLADEHFTVDCVDEFVCEYCWRAVKANATYEGYPLSTALARPLIAQKVLEVARDVDADAVAHGCTGKGNDQFRFESYLRAHGGEEFEIVAPVRDLNLTRDEEIAYAEERGIPVPVDVDSPYSVDENLWGRSIEGGVLEDPSEEPPEEVFEWTVSPAEAPDEPEVVEIEFEDGVPVEVDGRDDPVEIVRYLNETAGEHGVGRIDIIEDRVIGLKSREVYEAPAAVTLLEAHRALEAFTLTRRELSLKASLEEEWARLVYDGLWFNPLREHLEAFFDSTQRHVEGTVRVKLFKGSATVISRESPRALYEEELISYEEKQFDQRTAEGAVKLHGLQERLALRRRG.

Residues 7–15 and Ala-35 each bind ATP; that span reads AYSGGLDTS. Tyr-85 is a binding site for L-citrulline. Gly-115 contacts ATP. Residues Thr-117, Asn-121, and Asp-122 each contribute to the L-aspartate site. L-citrulline is bound at residue Asn-121. The L-citrulline site is built by Arg-125, Ser-174, Ser-183, Glu-258, and Tyr-270.

Belongs to the argininosuccinate synthase family. Type 1 subfamily. In terms of assembly, homotetramer.

The protein resides in the cytoplasm. It catalyses the reaction L-citrulline + L-aspartate + ATP = 2-(N(omega)-L-arginino)succinate + AMP + diphosphate + H(+). It functions in the pathway amino-acid biosynthesis; L-arginine biosynthesis; L-arginine from L-ornithine and carbamoyl phosphate: step 2/3. The polypeptide is Argininosuccinate synthase (Methanopyrus kandleri (strain AV19 / DSM 6324 / JCM 9639 / NBRC 100938)).